The primary structure comprises 382 residues: Heme A synthase (382 aa).

A run of 7 helical transmembrane segments spans residues 37-57 (IRVW…VGGL), 126-146 (VIGV…QVPA), 152-172 (LLFL…MVAS), 188-208 (LATH…YIME), 231-251 (STGL…VAGI), 288-308 (LVQF…VVVW), and 332-352 (LQIV…IAIF). H293 contributes to the heme binding site. Residue H353 coordinates heme. A helical transmembrane segment spans residues 356 to 376 (LAVIVWVLILRARFLSGYPIA).

Belongs to the COX15/CtaA family. Type 2 subfamily. As to quaternary structure, interacts with CtaB. Heme b is required as a cofactor.

It is found in the cell membrane. It catalyses the reaction Fe(II)-heme o + 2 A + H2O = Fe(II)-heme a + 2 AH2. The protein operates within porphyrin-containing compound metabolism; heme A biosynthesis; heme A from heme O: step 1/1. Functionally, catalyzes the conversion of heme O to heme A by two successive hydroxylations of the methyl group at C8. The first hydroxylation forms heme I, the second hydroxylation results in an unstable dihydroxymethyl group, which spontaneously dehydrates, resulting in the formyl group of heme A. The protein is Heme A synthase of Roseobacter denitrificans (strain ATCC 33942 / OCh 114) (Erythrobacter sp. (strain OCh 114)).